Here is a 359-residue protein sequence, read N- to C-terminus: Aminomethyltransferase (359 aa).

Belongs to the GcvT family. The glycine cleavage system is composed of four proteins: P, T, L and H.

It catalyses the reaction N(6)-[(R)-S(8)-aminomethyldihydrolipoyl]-L-lysyl-[protein] + (6S)-5,6,7,8-tetrahydrofolate = N(6)-[(R)-dihydrolipoyl]-L-lysyl-[protein] + (6R)-5,10-methylene-5,6,7,8-tetrahydrofolate + NH4(+). The glycine cleavage system catalyzes the degradation of glycine. The polypeptide is Aminomethyltransferase (Pseudoalteromonas atlantica (strain T6c / ATCC BAA-1087)).